Consider the following 1450-residue polypeptide: DNA-directed RNA polymerase RPB1 homolog (1450 aa).

The protein belongs to the RNA polymerase beta' chain family. Part of the viral DNA-directed RNA polymerase that consists of 8 polII-like subunits (RPB1, RPB2, RPB3, RPB5, RPB6, RPB7, RPB9, RPB10), a capping enzyme and a termination factor.

It localises to the virion. The enzyme catalyses RNA(n) + a ribonucleoside 5'-triphosphate = RNA(n+1) + diphosphate. In terms of biological role, catalytic component of the DNA-directed RNA polymerase (RNAP) that catalyzes the transcription in the cytoplasm of viral DNA into RNA using the four ribonucleoside triphosphates as substrates. Forms the polymerase active center together with RPB2. Part of the core element with the central large cleft, the clamp element that moves to open and close the cleft and the jaws that are thought to grab the incoming DNA template. The protein is DNA-directed RNA polymerase RPB1 homolog of African swine fever virus (isolate Tick/South Africa/Pretoriuskop Pr4/1996) (ASFV).